The following is a 1249-amino-acid chain: DNA-directed RNA polymerase subunit beta (1249 aa).

Belongs to the RNA polymerase beta chain family. The RNAP catalytic core consists of 2 alpha, 1 beta, 1 beta' and 1 omega subunit. When a sigma factor is associated with the core the holoenzyme is formed, which can initiate transcription.

The enzyme catalyses RNA(n) + a ribonucleoside 5'-triphosphate = RNA(n+1) + diphosphate. DNA-dependent RNA polymerase catalyzes the transcription of DNA into RNA using the four ribonucleoside triphosphates as substrates. This Clostridium botulinum (strain Eklund 17B / Type B) protein is DNA-directed RNA polymerase subunit beta.